We begin with the raw amino-acid sequence, 571 residues long: MSREAGSCRVGTGARARSRKPKKPHYIPRPWGKPYNYKCFQCPFTCLEKSHLYNHMKYSLCKDSLSLLLDSPDWACRRGSTTPRPHAPTPDRPGESDPGRQPQGARPTGAAPAPDLVVADIHSLHCGGGPKSRAKGSPGPPPPVARATRKGPGPSGLLPESWKPGMGGDPRGVGAGDMASAGPEGSVPCYPPPAPGEFPEAHSLHLSLLGVNYPLSPGLFSYLGPSLAAAAHVPFLASASPLLPPATAFPAVQPPQRPTPAPRLYYPLLLEHTLGLPAGKAALAKAPVSPRSPSGTPAPGLLKVPVPGLGPWPRVTPRDPGQEGELERAAQSDPRRRLSLGSRLELPKASPSLTRFCSRSSLPTGSSVMLWPEDGDPGGPETPGPEGPLPLQPRGPVPGSPEHVGEDLTRALGDYARVEQRLGQLGPAGGLAPRPLREQLGKIRLELLTIHQALEQAVRPPDAPLDLSVKRAPAKGPQALGEAWGRPELGPVLTGGTPEPPGMLGPAAPQPFSGHTTKCEADSSVPPPGLPLAAPDDPVIPGSGWGTCVATRSSQTPEAVCGLQSPQGAEV.

4 disordered regions span residues 1–27, 79–187, 286–402, and 476–571; these read MSREAGSCRVGTGARARSRKPKKPHYI, GSTT…EGSV, APVS…GSPE, and GPQA…GAEV. Residues 16-26 show a composition bias toward basic residues; sequence ARSRKPKKPHY. The span at 165 to 175 shows a compositional bias: gly residues; that stretch reads GMGGDPRGVGA. Over residues 316 to 336 the composition is skewed to basic and acidic residues; that stretch reads TPRDPGQEGELERAAQSDPRR. Polar residues predominate over residues 351–367; sequence PSLTRFCSRSSLPTGSS. Pro residues predominate over residues 380–399; the sequence is PETPGPEGPLPLQPRGPVPG.

The sequence is that of Proline-rich protein 35 (PRR35) from Homo sapiens (Human).